We begin with the raw amino-acid sequence, 214 residues long: Cytochrome c biogenesis ATP-binding export protein CcmA (214 aa).

The region spanning 12–214 (LAAHDLAFSR…TRMLTLEVAA (203 aa)) is the ABC transporter domain. 44–51 (GDNGAGKT) is an ATP binding site.

This sequence belongs to the ABC transporter superfamily. CcmA exporter (TC 3.A.1.107) family. In terms of assembly, the complex is composed of two ATP-binding proteins (CcmA) and two transmembrane proteins (CcmB).

The protein resides in the cell inner membrane. The catalysed reaction is heme b(in) + ATP + H2O = heme b(out) + ADP + phosphate + H(+). Part of the ABC transporter complex CcmAB involved in the biogenesis of c-type cytochromes; once thought to export heme, this seems not to be the case, but its exact role is uncertain. Responsible for energy coupling to the transport system. The polypeptide is Cytochrome c biogenesis ATP-binding export protein CcmA (Xanthomonas axonopodis pv. citri (strain 306)).